The primary structure comprises 85 residues: Progonadoliberin-2 (85 aa).

A signal peptide spans 1–23 (MCASRLVLLLGLLLCVGAHLSSG). Gln-24 carries the post-translational modification Pyrrolidone carboxylic acid. A Glycine amide modification is found at Gly-33.

It belongs to the GnRH family. In terms of tissue distribution, midbrain tegmentum.

It is found in the secreted. Its function is as follows. Stimulates the secretion of gonadotropins. The sequence is that of Progonadoliberin-2 (gnrh2) from Verasper moseri (Barfin flounder).